The sequence spans 486 residues: 2-succinylbenzoate--CoA ligase (486 aa).

This sequence belongs to the ATP-dependent AMP-binding enzyme family. MenE subfamily.

The catalysed reaction is 2-succinylbenzoate + ATP + CoA = 2-succinylbenzoyl-CoA + AMP + diphosphate. Its pathway is quinol/quinone metabolism; 1,4-dihydroxy-2-naphthoate biosynthesis; 1,4-dihydroxy-2-naphthoate from chorismate: step 5/7. The protein operates within quinol/quinone metabolism; menaquinone biosynthesis. Converts 2-succinylbenzoate (OSB) to 2-succinylbenzoyl-CoA (OSB-CoA). The protein is 2-succinylbenzoate--CoA ligase of Bacillus pumilus (strain SAFR-032).